We begin with the raw amino-acid sequence, 411 residues long: MSLLLPTNLQQYPSSSSFPSSTPILSPPPSTAFSVIVPRRRCLRLVTSCVSTVQSSVATNGSSPAPAPAAVVVERDQIRLGLPSKGRMAADAIDLLKDCQLFVKQVNPRQYVAQIPQLPNTEVWFQRPKDIVRKLLSGDLDLGIVGLDTLSEYGQENEDLIIVHEALNFGDCHLSIAIPNYGIFENINSLKELAQMPQWSEERPLRLATGFTYLGPKFMKENGIKHVVFSTADGALEAAPAMGIADAILDLVSSGITLKENNLKEIEGGVVLESQAALVASRRALNERKGALNTVHEILERLEAHLKADGQFTVVANMRGNSAQEVAERVLSQPSLSGLQGPTISPVYCTQNGKVSVDYYAIVICVPKKALYDSVKQLRAAGGSGVLVSPLTYIFDEDTPRWGQLLRNLGI.

Polar residues predominate over residues 1–12; sequence MSLLLPTNLQQY. Positions 1–27 are disordered; that stretch reads MSLLLPTNLQQYPSSSSFPSSTPILSP. Residues 1–49 constitute a chloroplast transit peptide; the sequence is MSLLLPTNLQQYPSSSSFPSSTPILSPPPSTAFSVIVPRRRCLRLVTSC. The segment covering 13 to 24 has biased composition (low complexity); the sequence is PSSSSFPSSTPI. At Val50 the chain carries N-acetylvaline.

It belongs to the ATP phosphoribosyltransferase family. Long subfamily. Requires Mg(2+) as cofactor. Expressed in leaves and at lower levels in roots (at protein level).

The protein resides in the plastid. Its subcellular location is the chloroplast. It catalyses the reaction 1-(5-phospho-beta-D-ribosyl)-ATP + diphosphate = 5-phospho-alpha-D-ribose 1-diphosphate + ATP. It functions in the pathway amino-acid biosynthesis; L-histidine biosynthesis; L-histidine from 5-phospho-alpha-D-ribose 1-diphosphate: step 1/9. Feedback inhibited by L-histidine. Catalyzes the condensation of ATP and 5-phosphoribose 1-diphosphate to form N'-(5'-phosphoribosyl)-ATP (PR-ATP). This is ATP phosphoribosyltransferase 1, chloroplastic (HISN1A) from Arabidopsis thaliana (Mouse-ear cress).